A 215-amino-acid chain; its full sequence is Fibroblast growth factor 17 (215 aa).

The N-terminal stretch at 1–22 (MYGINQRYLYISFHFFVVWCHA) is a signal peptide. N-linked (GlcNAc...) asparagine glycosylation is present at asparagine 137.

The protein belongs to the heparin-binding growth factors family.

It localises to the secreted. In terms of biological role, involved in dorsal-ventral embryonic patterning, by promoting expression of bone morphogenetic protein (BMP) antagonists such as chd. Also involved in anterior-posterior neural patterning and in mesoderm induction. The sequence is that of Fibroblast growth factor 17 (fgf17) from Danio rerio (Zebrafish).